Reading from the N-terminus, the 339-residue chain is Ribosomal RNA small subunit methyltransferase C (339 aa).

It belongs to the methyltransferase superfamily. RsmC family. In terms of assembly, monomer.

The protein resides in the cytoplasm. The enzyme catalyses guanosine(1207) in 16S rRNA + S-adenosyl-L-methionine = N(2)-methylguanosine(1207) in 16S rRNA + S-adenosyl-L-homocysteine + H(+). Specifically methylates the guanine in position 1207 of 16S rRNA in the 30S particle. The polypeptide is Ribosomal RNA small subunit methyltransferase C (Aliivibrio salmonicida (strain LFI1238) (Vibrio salmonicida (strain LFI1238))).